Consider the following 187-residue polypeptide: UPF0301 protein PMI0339 (187 aa).

Belongs to the UPF0301 (AlgH) family.

The protein is UPF0301 protein PMI0339 of Proteus mirabilis (strain HI4320).